The chain runs to 394 residues: Histidinol dehydrogenase (394 aa).

The NAD(+) site is built by tyrosine 113, glutamine 172, and asparagine 195. 3 residues coordinate substrate: threonine 218, glutamine 240, and histidine 243. Glutamine 240 and histidine 243 together coordinate Zn(2+). Active-site proton acceptor residues include glutamate 294 and histidine 295. 4 residues coordinate substrate: histidine 295, aspartate 327, glutamate 380, and histidine 385. Zn(2+) is bound at residue aspartate 327. Histidine 385 contributes to the Zn(2+) binding site.

The protein belongs to the histidinol dehydrogenase family. It depends on Zn(2+) as a cofactor.

It catalyses the reaction L-histidinol + 2 NAD(+) + H2O = L-histidine + 2 NADH + 3 H(+). Its pathway is amino-acid biosynthesis; L-histidine biosynthesis; L-histidine from 5-phospho-alpha-D-ribose 1-diphosphate: step 9/9. Catalyzes the sequential NAD-dependent oxidations of L-histidinol to L-histidinaldehyde and then to L-histidine. In Sulfurisphaera tokodaii (strain DSM 16993 / JCM 10545 / NBRC 100140 / 7) (Sulfolobus tokodaii), this protein is Histidinol dehydrogenase.